The primary structure comprises 70 residues: Cold shock-like protein CspG (70 aa).

Positions 7–67 constitute a CSD domain; the sequence is GLVKWFNEEK…GQKGLQAANV (61 aa).

It is found in the cytoplasm. This is Cold shock-like protein CspG (cspG) from Shewanella violacea (strain JCM 10179 / CIP 106290 / LMG 19151 / DSS12).